We begin with the raw amino-acid sequence, 422 residues long: Carboxypeptidase B2 (422 aa).

Positions 1-21 (MKLYGLGVLVAIILYEKHGLA) are cleaved as a signal peptide. The propeptide at 22–113 (FQSGHVLSAL…QTSNDTVSPR (92 aa)) is activation peptide. N-linked (GlcNAc...) asparagine glycans are attached at residues Asn43, Asn72, Asn84, and Asn107. Residues 121–418 (QYHSLNEIYS…AAVSKIAWHV (298 aa)) enclose the Peptidase M14 domain. A disulfide bridge connects residues Cys177 and Cys190. Zn(2+) is bound by residues His180 and Glu183. Substrate-binding positions include 180-183 (HARE) and Arg238. Asn240 carries N-linked (GlcNAc...) asparagine glycosylation. 2 cysteine pairs are disulfide-bonded: Cys249-Cys273 and Cys264-Cys278. 255–256 (NR) provides a ligand contact to substrate. His309 serves as a coordination point for Zn(2+). Substrate is bound at residue 310-311 (SY). Asn322 carries an N-linked (GlcNAc...) asparagine glycan. Tyr362 serves as a coordination point for substrate. Glu384 (proton donor/acceptor) is an active-site residue.

The protein belongs to the peptidase M14 family. Zn(2+) serves as cofactor. In terms of tissue distribution, plasma; synthesized in the liver.

The protein resides in the secreted. It catalyses the reaction Release of C-terminal Arg and Lys from a polypeptide.. TAFI/CPB2 is unique among carboxypeptidases in that it spontaneously inactivates with a short half-life, a property that is crucial for its role in controlling blood clot lysis. The zymogen is stabilized by interactions with the activation peptide. Release of the activation peptide increases a dynamic flap mobility and in time this leads to conformational changes that disrupt the catalytic site and expose a cryptic thrombin-cleavage site present at Arg-323. In terms of biological role, cleaves C-terminal arginine or lysine residues from biologically active peptides such as kinins or anaphylatoxins in the circulation thereby regulating their activities. Down-regulates fibrinolysis by removing C-terminal lysine residues from fibrin that has already been partially degraded by plasmin. The polypeptide is Carboxypeptidase B2 (Cpb2) (Rattus norvegicus (Rat)).